Consider the following 137-residue polypeptide: Small ribosomal subunit protein uS9c (137 aa).

The protein belongs to the universal ribosomal protein uS9 family.

It localises to the plastid. Its subcellular location is the chloroplast. The chain is Small ribosomal subunit protein uS9c (rps9) from Mesostigma viride (Green alga).